Reading from the N-terminus, the 188-residue chain is Cytochrome b561 homolog 2 (188 aa).

The Cytoplasmic portion of the chain corresponds to 1–15 (MSFTNTPERYGVISA). A helical transmembrane segment spans residues 16-36 (AFHWLSAIIVYGMFALGLWMV). Heme b contacts are provided by His-18 and His-52. Over 37–54 (TLSYYDGWYHKAPELHKS) the chain is Periplasmic. The chain crosses the membrane as a helical span at residues 55 to 75 (IGILLMMGLVIRVLWRVISPP). The Cytoplasmic segment spans residues 76 to 91 (PGPLPSYSPMTRLAAR). Residues 92 to 112 (AGHLALYLLLFAIGISGYLIS) traverse the membrane as a helical segment. Topologically, residues 113–143 (TADGKPISVFGWFDVPATLADAGAQADFAGA) are periplasmic. Residues 144 to 164 (LHFWLAWSVVVLSVMHGFMAL) traverse the membrane as a helical segment. Residues His-145 and His-159 each contribute to the heme b site. Residues 165 to 188 (KHHFIDKDDTLKRMLGKSSSDYGV) lie on the Cytoplasmic side of the membrane.

This sequence belongs to the cytochrome b561 family. The cofactor is heme b.

The protein resides in the cell inner membrane. This Escherichia coli (strain K12) protein is Cytochrome b561 homolog 2 (yceJ).